The sequence spans 842 residues: Netrin receptor UNC5A (842 aa).

An N-terminal signal peptide occupies residues 1–25; the sequence is MAVRPGLWPALLGIVLAAWLRGSGA. Residues 26-306 lie on the Extracellular side of the membrane; sequence QQSATVANPV…ASGPEDVALY (281 aa). In terms of domain architecture, Ig-like spans 44-141; the sequence is PHFLVEPEDV…SGTTKSQKAY (98 aa). 3 disulfide bridges follow: Cys-65–Cys-126, Cys-77–Cys-124, and Cys-170–Cys-221. 2 N-linked (GlcNAc...) asparagine glycosylation sites follow: Asn-107 and Asn-218. The 80-residue stretch at 155–234 folds into the Ig-like C2-type domain; sequence PLAKEVSLEQ…NIVARRRSAS (80 aa). The TSP type-1 domain occupies 242–294; that stretch reads DGSWSPWSKWSACGLDCTHWRSRECSDPAPRNGGEECQGTDLDTRNCTSDLCV. Trp-245, Trp-248, and Trp-251 each carry a C-linked (Man) tryptophan glycan. 3 cysteine pairs are disulfide-bonded: Cys-254-Cys-288, Cys-258-Cys-293, and Cys-266-Cys-278. N-linked (GlcNAc...) asparagine glycosylation occurs at Asn-287. A helical membrane pass occupies residues 307–327; it reads VGLIAVAVCLVLLLLVLILVY. At 328-842 the chain is on the cytoplasmic side; that stretch reads CRKKEGLDSD…GLFTVSEAEC (515 aa). One can recognise a ZU5 domain in the interval 441-584; it reads NMTYGTFNFL…LGRFALVGEA (144 aa). The segment at 605-623 is interaction with DCC; that stretch reads SLEYNIRVYCLHDTHDALK. Positions 761–841 constitute a Death domain; sequence QKIISSLDPP…AGLFTVSEAE (81 aa).

It belongs to the unc-5 family. Homodimer and homooligomer. Interacts with the cytoplasmic part of DCC. Interacts with MAGED1. Interacts with PRKCABP, possibly mediating some interaction with PKC. Interacts (via extracellular domain) with FLRT2 (via extracellular domain). Interacts (via extracellular domain) with FLRT3 (via extracellular domain). Post-translationally, phosphorylated on cytoplasmic tyrosine residues. Phosphorylated by PKC in vitro. Proteolytically cleaved by caspases during apoptosis. The cleavage does not take place when the receptor is associated with netrin ligand. Its cleavage by caspases is required to induce apoptosis. In terms of processing, the two extracellular TSRs of UNC5A contain WxxWxxWxxC motifs that can be C-mannosylated on all tryptophans. DPY19L1 preferentially mannosylates the first two tryptophans and DPY19L3 prefers the third. C-mannosylation by DPY19L1 is required for transport of UNC5A from the endoplasmic reticulum to the cell surface.

Its subcellular location is the cell membrane. It localises to the membrane raft. It is found in the cell projection. The protein resides in the neuron projection. Its function is as follows. Receptor for netrin required for axon guidance. Functions in the netrin signaling pathway and promotes neurite outgrowth in response to NTN1. Mediates axon repulsion of neuronal growth cones in the developing nervous system in response to netrin. Axon repulsion in growth cones may be mediated by its association with DCC that may trigger signaling for repulsion. It also acts as a dependence receptor required for apoptosis induction when not associated with netrin ligand. In Homo sapiens (Human), this protein is Netrin receptor UNC5A (UNC5A).